The primary structure comprises 223 residues: Ribonuclease 3 (223 aa).

One can recognise an RNase III domain in the interval 4 to 127; sequence LNRLEEHLGY…LMGAIYLESG (124 aa). Glu40 serves as a coordination point for Mg(2+). The active site involves Asp44. Mg(2+) contacts are provided by Asp113 and Glu116. Residue Glu116 is part of the active site. The DRBM domain occupies 154 to 223; sequence DYKTTLQEIT…AWKVLQGMNI (70 aa).

Belongs to the ribonuclease III family. Homodimer. The cofactor is Mg(2+).

The protein localises to the cytoplasm. It catalyses the reaction Endonucleolytic cleavage to 5'-phosphomonoester.. Functionally, digests double-stranded RNA. Involved in the processing of primary rRNA transcript to yield the immediate precursors to the large and small rRNAs (23S and 16S). Processes some mRNAs, and tRNAs when they are encoded in the rRNA operon. Processes pre-crRNA and tracrRNA of type II CRISPR loci if present in the organism. The polypeptide is Ribonuclease 3 (Campylobacter fetus subsp. fetus (strain 82-40)).